The following is a 682-amino-acid chain: Protein PilJ (682 aa).

Topologically, residues 1–14 (MKKINAGNLFAGMR) are cytoplasmic. The helical transmembrane segment at 15–38 (SSSVIAGLFIVLIVSIVLLFANFA) threads the bilayer. Residues 39–306 (YLNTQSNHDK…DGFENLAGGR (268 aa)) are Periplasmic-facing. A helical membrane pass occupies residues 307–333 (SINLFAGYALGALALASIILIGLVMVR). Over 334 to 682 (ETNRRLAETA…FKLPEGVEQA (349 aa)) the chain is Cytoplasmic. The HAMP domain occupies 347 to 398 (DRNQAAILRLLDEIADLADGDLTVAATVTEDFTGAIADSINYSIDQLRELVE). Residues 403–639 (TAVQVAAAAQ…HISNTMNVIQ (237 aa)) form the Methyl-accepting transducer domain.

This sequence belongs to the methyl-accepting chemotaxis (MCP) protein family.

It is found in the cell inner membrane. Its function is as follows. May be a part of a signal-transduction system that regulates twitching motility by controlling pilus function (extension and retraction). The sequence is that of Protein PilJ (pilJ) from Pseudomonas aeruginosa (strain ATCC 15692 / DSM 22644 / CIP 104116 / JCM 14847 / LMG 12228 / 1C / PRS 101 / PAO1).